We begin with the raw amino-acid sequence, 66 residues long: uncharacterized protein (66 aa).

The N-terminal stretch at 1 to 19 (MRRLYRHLASFFLLPSCPG) is a signal peptide.

This is an uncharacterized protein from Saccharomyces cerevisiae (strain ATCC 204508 / S288c) (Baker's yeast).